Consider the following 377-residue polypeptide: N-acetyldiaminopimelate deacetylase (377 aa).

Residue aspartate 70 is part of the active site. Glutamate 129 serves as the catalytic Proton acceptor.

The protein belongs to the peptidase M20A family. N-acetyldiaminopimelate deacetylase subfamily.

The catalysed reaction is N-acetyl-(2S,6S)-2,6-diaminopimelate + H2O = (2S,6S)-2,6-diaminopimelate + acetate. It participates in amino-acid biosynthesis; L-lysine biosynthesis via DAP pathway; LL-2,6-diaminopimelate from (S)-tetrahydrodipicolinate (acetylase route): step 3/3. Functionally, catalyzes the conversion of N-acetyl-diaminopimelate to diaminopimelate and acetate. In Streptococcus thermophilus (strain CNRZ 1066), this protein is N-acetyldiaminopimelate deacetylase.